Consider the following 55-residue polypeptide: Large ribosomal subunit protein bL33 (55 aa).

Residues 1–11 (MAKSGRDKIKL) are compositionally biased toward basic and acidic residues. The segment at 1–28 (MAKSGRDKIKLESTAGTGHFYTTTKNKR) is disordered. Residues 14–24 (TAGTGHFYTTT) are compositionally biased toward polar residues.

The protein belongs to the bacterial ribosomal protein bL33 family.

In Janthinobacterium sp. (strain Marseille) (Minibacterium massiliensis), this protein is Large ribosomal subunit protein bL33.